We begin with the raw amino-acid sequence, 443 residues long: Methyl-coenzyme M reductase II subunit beta (443 aa).

Tyrosine 367 lines the coenzyme M pocket. A coenzyme B-binding site is contributed by glycine 369.

It belongs to the methyl-coenzyme M reductase beta subunit family. MCR is a hexamer of two alpha, two beta, and two gamma chains, forming a dimer of heterotrimers. Requires coenzyme F430 as cofactor.

The enzyme catalyses coenzyme B + methyl-coenzyme M = methane + coenzyme M-coenzyme B heterodisulfide. It functions in the pathway one-carbon metabolism; methyl-coenzyme M reduction; methane from methyl-coenzyme M: step 1/1. Functionally, component of the methyl-coenzyme M reductase (MCR) I that catalyzes the reductive cleavage of methyl-coenzyme M (CoM-S-CH3 or 2-(methylthio)ethanesulfonate) using coenzyme B (CoB or 7-mercaptoheptanoylthreonine phosphate) as reductant which results in the production of methane and the mixed heterodisulfide of CoB and CoM (CoM-S-S-CoB). This is the final step in methanogenesis. The protein is Methyl-coenzyme M reductase II subunit beta of Methanothermobacter marburgensis (strain ATCC BAA-927 / DSM 2133 / JCM 14651 / NBRC 100331 / OCM 82 / Marburg) (Methanobacterium thermoautotrophicum).